Here is a 685-residue protein sequence, read N- to C-terminus: Phenoloxidase subunit 1 (685 aa).

Cu cation is bound by residues His209, His213, and His239. Glu351 acts as the Proton acceptor in catalysis. Residues His366, His370, and His406 each coordinate Cu cation. Intrachain disulfides connect Cys580/Cys622 and Cys582/Cys629.

In terms of assembly, heterodimer. Forms a complex with an interleukin 1-like protein as a consequence of a host defense response. Requires Cu(2+) as cofactor. Post-translationally, the N-terminus is blocked. Synthesized by oenocytoids, a type of hemocyte, and released into the hemolymph plasma.

Its subcellular location is the secreted. The catalysed reaction is 2 L-dopa + O2 = 2 L-dopaquinone + 2 H2O. It catalyses the reaction L-tyrosine + O2 = L-dopaquinone + H2O. With respect to regulation, activated by immulectin and lipopolysaccharide. In terms of biological role, this is a copper-containing oxidase that functions in the formation of pigments such as melanins and other polyphenolic compounds. Catalyzes the rate-limiting conversions of tyrosine to DOPA, DOPA to DOPA-quinone and possibly 5,6 dihydroxyindole to indole-5'6 quinone. Binds to the surface of hemocytes and is involved in hemocyte melanization. The protein is Phenoloxidase subunit 1 of Manduca sexta (Tobacco hawkmoth).